The sequence spans 84 residues: Small ribosomal subunit protein uS17 (84 aa).

The protein belongs to the universal ribosomal protein uS17 family. Part of the 30S ribosomal subunit.

Its function is as follows. One of the primary rRNA binding proteins, it binds specifically to the 5'-end of 16S ribosomal RNA. The protein is Small ribosomal subunit protein uS17 of Clostridium kluyveri (strain NBRC 12016).